We begin with the raw amino-acid sequence, 406 residues long: Phloroisovalerophenone synthase (406 aa).

Residue Cys-171 is part of the active site.

It belongs to the thiolase-like superfamily. Chalcone/stilbene synthases family.

It catalyses the reaction 3-methylbutanoyl-CoA + 3 malonyl-CoA + 3 H(+) = phlorisovalerophenone + 3 CO2 + 4 CoA. Functionally, produces 3-methyl-1-(2,4,6-trihydroxyphenyl)butan-1-one (phloroisovalerophenone). The chain is Phloroisovalerophenone synthase (VPS) from Psilotum nudum (Whisk fern).